The following is a 215-amino-acid chain: MASRGATRPNGPNTGNKICQFKLVLLGESAVGKSSLVLRFVKGQFHEFQESTIGAAFLTQTVCLDDTTVKFEIWDTAGQERYHSLAPMYYRGAQAAIVVYDITNEESFARAKNWVKELQRQASPNIVIALSGNKADLANKRAVDFQEAQSYADDNSLLFMETSAKTSMNVNEIFMAIAKKLPKNEPQNPGANSARGRGVDLTEPTQPTRNQCCSN.

Positions 29, 30, 32, 33, 34, 35, 46, 47, 52, and 78 each coordinate GTP. Residue S34 coordinates Mg(2+). 2 consecutive short sequence motifs (switch) follow at residues 44 to 56 (QFHEFQESTIGAA) and 77 to 93 (AGQERYHSLAPMYYRGA). T52 contributes to the Mg(2+) binding site. S84 is modified (phosphoserine; by LRRK2). (Microbial infection) N-beta-linked (GlcNAc) arginine glycosylation occurs at R120. GTP is bound by residues N133, K134, D136, A164, and K165. The segment at 181–215 (LPKNEPQNPGANSARGRGVDLTEPTQPTRNQCCSN) is disordered. The segment covering 203–215 (EPTQPTRNQCCSN) has biased composition (polar residues). S-geranylgeranyl cysteine attachment occurs at residues C212 and C213.

It belongs to the small GTPase superfamily. Rab family. As to quaternary structure, interacts with SGSM1 and SGSM3. Interacts with PIK3CB. Interacts with GDI1; this promotes dissociation from membranes; phosphorylation at Ser-84 disrupts this interaction. Interacts with GDI2; phosphorylation at Ser-84 disrupts the interaction. Interacts with EEA1. Interacts with RIN1 and GAPVD1, which regulate its pathway, probably by acting as a GEF. Interacts with RINL. Interacts with ALS2CL, SUN2, ZFYVE20 and RUFY1. Interacts with RABEP1; one RABEP1 homodimer binds two RAB5A chains, but at opposite sides of the dimer. Interacts with OCRL. Interacts with INPP5F. May be a component of a complex composed of RAB5A, DYN2 and PIK3C3. Does not interact with BLOC-3 complex (heterodimer of HPS1 and HPS4). Interacts with CLN5. Interacts with APPL2. Interacts with F8A1/F8A2/F8A3. Found in a complex with F8A1/F8A2/F8A3, HTT and RAB5A; mediates the recruitment of HTT by RAB5A onto early endosomes. Interacts with ATP9A. Interacts with PPP1R21; mediates the recruitment of FERRY complex by RAB5A onto early endosomes. Mg(2+) serves as cofactor. Post-translationally, phosphorylation of Ser-84 in the switch II region by LRRK2 prevents the association of RAB regulatory proteins, including RAB GDP dissociation inhibitors GDI1 and GDI2. (Microbial infection) Glycosylated on arginine residues by S.typhimurium protein Ssek3.

Its subcellular location is the cell membrane. It localises to the early endosome membrane. It is found in the melanosome. The protein localises to the cytoplasmic vesicle. The protein resides in the cell projection. Its subcellular location is the ruffle. It localises to the membrane. It is found in the cytoplasm. The protein localises to the cytosol. The protein resides in the phagosome membrane. Its subcellular location is the endosome membrane. It catalyses the reaction GTP + H2O = GDP + phosphate + H(+). Its activity is regulated as follows. Regulated by guanine nucleotide exchange factors (GEFs) including RINL, which promote the exchange of bound GDP for free GTP. Regulated by GTPase activating proteins (GAPs) which increase the GTP hydrolysis activity. Inhibited by GDP dissociation inhibitors (GDIs). Functionally, the small GTPases Rab are key regulators of intracellular membrane trafficking, from the formation of transport vesicles to their fusion with membranes. Rabs cycle between an inactive GDP-bound form and an active GTP-bound form that is able to recruit to membranes different sets of downstream effectors directly responsible for vesicle formation, movement, tethering and fusion. RAB5A is required for the fusion of plasma membranes and early endosomes. Contributes to the regulation of filopodia extension. Required for the exosomal release of SDCBP, CD63, PDCD6IP and syndecan. Regulates maturation of apoptotic cell-containing phagosomes, probably downstream of DYN2 and PIK3C3. In Homo sapiens (Human), this protein is Ras-related protein Rab-5A.